We begin with the raw amino-acid sequence, 887 residues long: Alanine--tRNA ligase (887 aa).

Residues His-573, His-577, Cys-676, and His-680 each coordinate Zn(2+).

The protein belongs to the class-II aminoacyl-tRNA synthetase family. It depends on Zn(2+) as a cofactor.

Its subcellular location is the cytoplasm. It carries out the reaction tRNA(Ala) + L-alanine + ATP = L-alanyl-tRNA(Ala) + AMP + diphosphate. Catalyzes the attachment of alanine to tRNA(Ala) in a two-step reaction: alanine is first activated by ATP to form Ala-AMP and then transferred to the acceptor end of tRNA(Ala). Also edits incorrectly charged Ser-tRNA(Ala) and Gly-tRNA(Ala) via its editing domain. The chain is Alanine--tRNA ligase from Corynebacterium jeikeium (strain K411).